Consider the following 205-residue polypeptide: Ribosome maturation factor RimP (205 aa).

Polar residues predominate over residues 1-13 (MSNAEATTSSDRT). The disordered stretch occupies residues 1–27 (MSNAEATTSSDRTGTGKAEAESVHNPE). Residues 18 to 27 (AEAESVHNPE) show a composition bias toward basic and acidic residues.

This sequence belongs to the RimP family.

It is found in the cytoplasm. Required for maturation of 30S ribosomal subunits. The polypeptide is Ribosome maturation factor RimP (Arthrobacter sp. (strain FB24)).